Reading from the N-terminus, the 1785-residue chain is Mellein synthase (1785 aa).

The disordered stretch occupies residues 1 to 36; sequence MATPDDPATPALSLSASNSSSPTAASSVPPPTGTSE. The segment covering 8–27 has biased composition (low complexity); sequence ATPALSLSASNSSSPTAASS. Residues 39–464 form the Ketosynthase family 3 (KS3) domain; that stretch reads YDDVAIIGMS…GTVSHAIIEQ (426 aa). Active-site for beta-ketoacyl synthase activity residues include Cys-211, His-346, and His-386. The segment at 575-888 is malonyl-CoA:ACP transacylase (MAT) domain; the sequence is VWVFSGHGSH…AVAQLWTKGV (314 aa). Ser-661 (for malonyltransferase activity) is an active-site residue. The interval 933–1047 is N-terminal hotdog fold; it reads NNMLGQRMVV…ASWENEPSAN (115 aa). In terms of domain architecture, PKS/mFAS DH spans 933-1206; the sequence is NNMLGQRMVV…FTEVEATPTK (274 aa). The dehydratase (DH) domain stretch occupies residues 935–1203; sequence MLGQRMVVAG…SIRFTEVEAT (269 aa). Catalysis depends on His-965, which acts as the Proton acceptor; for dehydratase activity. A C-terminal hotdog fold region spans residues 1062-1206; the sequence is GTRVSETFSV…FTEVEATPTK (145 aa). Asp-1123 functions as the Proton donor; for dehydratase activity in the catalytic mechanism. Residues 1418-1608 are ketoreductase (KR) domain; that stretch reads GTYVLTGGLG…AIAFQWTAWR (191 aa). Residues 1681-1698 show a composition bias toward polar residues; the sequence is QDQSAPASGNASDSSGRP. A disordered region spans residues 1681 to 1701; it reads QDQSAPASGNASDSSGRPTAS. Residues 1706–1781 enclose the Carrier domain; that stretch reads PWLDVKIREC…AMVGWFQKQF (76 aa). An O-(pantetheine 4'-phosphoryl)serine modification is found at Ser-1741.

It participates in secondary metabolite biosynthesis. Its function is as follows. Polyketide synthase that produces (R)-mellein, a secondary metabolite that inhibits the germination of wheat (Triticum aestivum) and barrel medic (Medicago truncatula) seeds. Condensates 1 acetate starter unit and 4 extender malonate units. The nascent pentaketide intermediate then undergoes an aldol cyclization and is aromatized via dehydration. The (R)-O-methylmellein isolated from P.nodorum is most likely to be derived from (R)-mellein via an additional methylation at the hydroxyl group. Interestingly, no O-methyltransferase gene is encoded in the vicinity of MLNS on the chromosome. Thus, the O-methylation is likely to be catalyzed by an endogenous O-methyltransferase encoded elsewhere in the genome of P.nodorum. The sequence is that of Mellein synthase from Phaeosphaeria nodorum (strain SN15 / ATCC MYA-4574 / FGSC 10173) (Glume blotch fungus).